We begin with the raw amino-acid sequence, 362 residues long: Lipoprotein p35 (362 aa).

The N-terminal stretch at 1–30 (MKIKKIKLLKALALTGAFGIVATVPVIVSS) is a signal peptide. C31 carries N-palmitoyl cysteine lipidation. C31 carries S-diacylglycerol cysteine lipidation. A disordered region spans residues 33–53 (STSENNGNGNGNGGTDGNTQQ).

This sequence belongs to the p35 lipoprotein family. Post-translationally, the N-terminus is blocked.

The protein resides in the cell membrane. Its function is as follows. Major M.penetrans antigen. The polypeptide is Lipoprotein p35 (Malacoplasma penetrans (Mycoplasma penetrans)).